A 112-amino-acid chain; its full sequence is MASPNGGEDFESSLISLENLDRASPDLWPEQLPGVSEFAASFKNPITNSPPKWMAELESEDIEMLKELGSLTTANLMEKVKGLQNLAYQLGLEESREMTRGKFLNILERPKK.

This sequence belongs to the lin-52 family. In terms of assembly, component of the DREAM complex.

The chain is Protein lin-52 homolog (lin52) from Danio rerio (Zebrafish).